The following is a 705-amino-acid chain: Elongation factor G (705 aa).

The 283-residue stretch at 8–290 (ERYRNFGIMA…GVVHLLPSPA (283 aa)) folds into the tr-type G domain. Residues 17-24 (AHIDAGKT), 88-92 (DTPGH), and 142-145 (NKMD) each bind GTP. The tract at residues 290 to 309 (ADRPPVQGIDEDEKEDTRAA) is disordered.

Belongs to the TRAFAC class translation factor GTPase superfamily. Classic translation factor GTPase family. EF-G/EF-2 subfamily.

It localises to the cytoplasm. Its function is as follows. Catalyzes the GTP-dependent ribosomal translocation step during translation elongation. During this step, the ribosome changes from the pre-translocational (PRE) to the post-translocational (POST) state as the newly formed A-site-bound peptidyl-tRNA and P-site-bound deacylated tRNA move to the P and E sites, respectively. Catalyzes the coordinated movement of the two tRNA molecules, the mRNA and conformational changes in the ribosome. The sequence is that of Elongation factor G from Xanthomonas oryzae pv. oryzae (strain MAFF 311018).